Reading from the N-terminus, the 175-residue chain is Shikimate kinase (175 aa).

Position 17–22 (17–22 (GAGKST)) interacts with ATP. Residue Ser21 participates in Mg(2+) binding. Substrate contacts are provided by Asp39, Arg63, and Gly85. Arg123 provides a ligand contact to ATP. Position 142 (Arg142) interacts with substrate. Gln159 contributes to the ATP binding site.

The protein belongs to the shikimate kinase family. Monomer. Requires Mg(2+) as cofactor.

The protein resides in the cytoplasm. It carries out the reaction shikimate + ATP = 3-phosphoshikimate + ADP + H(+). It functions in the pathway metabolic intermediate biosynthesis; chorismate biosynthesis; chorismate from D-erythrose 4-phosphate and phosphoenolpyruvate: step 5/7. In terms of biological role, catalyzes the specific phosphorylation of the 3-hydroxyl group of shikimic acid using ATP as a cosubstrate. This chain is Shikimate kinase, found in Photobacterium profundum (strain SS9).